The chain runs to 93 residues: Pyrimidine/purine nucleoside phosphorylase (93 aa).

It belongs to the nucleoside phosphorylase PpnP family.

It catalyses the reaction a purine D-ribonucleoside + phosphate = a purine nucleobase + alpha-D-ribose 1-phosphate. The catalysed reaction is adenosine + phosphate = alpha-D-ribose 1-phosphate + adenine. It carries out the reaction cytidine + phosphate = cytosine + alpha-D-ribose 1-phosphate. The enzyme catalyses guanosine + phosphate = alpha-D-ribose 1-phosphate + guanine. It catalyses the reaction inosine + phosphate = alpha-D-ribose 1-phosphate + hypoxanthine. The catalysed reaction is thymidine + phosphate = 2-deoxy-alpha-D-ribose 1-phosphate + thymine. It carries out the reaction uridine + phosphate = alpha-D-ribose 1-phosphate + uracil. The enzyme catalyses xanthosine + phosphate = alpha-D-ribose 1-phosphate + xanthine. Its function is as follows. Catalyzes the phosphorolysis of diverse nucleosides, yielding D-ribose 1-phosphate and the respective free bases. Can use uridine, adenosine, guanosine, cytidine, thymidine, inosine and xanthosine as substrates. Also catalyzes the reverse reactions. The chain is Pyrimidine/purine nucleoside phosphorylase from Pseudomonas aeruginosa (strain LESB58).